An 860-amino-acid polypeptide reads, in one-letter code: MYMSTDEVRNAFLKFFESKGHQIVESSSLVPHNDPTLLFTNAGMNQFKDCFLGLEKRAYTRATTAQRCVRAGGKHNDLENVGFTARHHTFFEMLGNFSFGDYFKEDAISFAWEFLTDVLKLPADRLLVTVYETDDEAFDIWNKKVGVPADRIIRIGDKKGGKPYESDNFWQMGDTGPCGPCTEIFYDHGEHIWGGRPGTPEEDGDRFIEIWNNVFMQFNRHADGTMEPLPKPSVDTGMGIERISAIMQGVHSNYEIDVFQALIKAAAEVIGYEDLSNQSLRVIADHIRSCSFLIVDGVMPSNEGRGYVLRRIIRRAVRHGNKLGAQGAFFHKLVGVLADIMGTAGEELKRQQAVVEKVLRIEEENFGRTLERGMAILNEALDNLDGKVLDGETVFKLYDTYGFPADLTNDVAREREFAIDEEGFEKAMEEQRQRAREAGQFGTDYNAAIKVDTQTEFCGYVGTKGSSSVAAMFVEGNEVDSLSAGDKAIIVLGETPFYAESGGQCGDAGEIRTEAGVFRVEDTQKLGNAIAHHGVMAEGVLAKGDEVATIVDAERRAAISLNHSATHLLHAALRQVLGEHVTQKGSLVKAENLRFDFSHLEAVTAAELKEVERLVNAQIRRNHVIETNVMDIESAKKKGAMALFGEKYDDEVRVLSMGDFSTELCGGIHASNTGDIGLFKITSESGIAAGIRRIEAVTGEAALDAIEAQAAKYEEKLAESAQKAKTLEKELQKLKDKMAAAESANIMGKAVEVNGTKVLVAALEGADSKNLRTMVDDIKNQMGSGVVLLANVTDDKVGLIAGVTKDLVGKVKAGDLVKMVAEQVGGKGGGRPDMAQAGGTDVSALPEAIKTVQPWLEERL.

Zn(2+)-binding residues include His563, His567, Cys665, and His669.

Belongs to the class-II aminoacyl-tRNA synthetase family. Requires Zn(2+) as cofactor.

It localises to the cytoplasm. It carries out the reaction tRNA(Ala) + L-alanine + ATP = L-alanyl-tRNA(Ala) + AMP + diphosphate. Its function is as follows. Catalyzes the attachment of alanine to tRNA(Ala) in a two-step reaction: alanine is first activated by ATP to form Ala-AMP and then transferred to the acceptor end of tRNA(Ala). Also edits incorrectly charged Ser-tRNA(Ala) and Gly-tRNA(Ala) via its editing domain. This chain is Alanine--tRNA ligase, found in Vibrio parahaemolyticus serotype O3:K6 (strain RIMD 2210633).